A 657-amino-acid chain; its full sequence is uncharacterized protein (657 aa).

A Phosphoserine modification is found at Ser114. 5 disordered regions span residues 142–216, 228–248, 291–312, 335–354, and 399–522; these read LASQ…SDEE, SSREKNTNQGFSSANVSEEEE, STRSRADYPQSHVSSDTASHTP, SSPGRSEAETVDEPVSEGAD, and AEAS…SGRH. Polar residues predominate over residues 143–169; that stretch reads ASQNTDKTSQNQARELPVTENNAQNAK. Over residues 190–206 the composition is skewed to basic and acidic residues; it reads AGKERTLQTPKQKEPAR. Ser213 is subject to Phosphoserine. Polar residues-rich tracts occupy residues 234 to 243 and 301 to 312; these read TNQGFSSANV and SHVSSDTASHTP. Acidic residues predominate over residues 343-354; sequence ETVDEPVSEGAD. Low complexity predominate over residues 437-451; sequence SASSASAIQQDSTSS. A compositionally biased stretch (polar residues) spans 462 to 484; the sequence is NTVSSAYSEDFENSPSLTASEPT. Residues 485–495 are compositionally biased toward basic and acidic residues; sequence AHSKESLDRTL. Polar residues predominate over residues 499-513; sequence SESSSSVKTDLPQTA.

This is an uncharacterized protein from Homo sapiens (Human).